Reading from the N-terminus, the 392-residue chain is Gastricsin (392 aa).

A signal peptide spans 1–16 (MKWMVVALLCLPLLEA). Residues 17 to 62 (ALIRVPLKKMKSIRETMKEQGVLKDFLKNHKYDPGQKYHFGKFGDY) constitute a propeptide, activation peptide. Residues 76–389 (YYGEISIGTP…DMGNNRVGLA (314 aa)) form the Peptidase A1 domain. D94 is a catalytic residue. Cystine bridges form between C107–C112 and C270–C275. The active site involves D280. Residues C314 and C347 are joined by a disulfide bond.

The protein belongs to the peptidase A1 family.

The protein localises to the secreted. It carries out the reaction More restricted specificity than pepsin A, but shows preferential cleavage at Tyr-|-Xaa bonds. High activity on hemoglobin.. Hydrolyzes a variety of proteins. In Mus musculus (Mouse), this protein is Gastricsin (Pgc).